We begin with the raw amino-acid sequence, 919 residues long: Glutamate receptor ionotropic, kainate 3 (919 aa).

Residues 1-31 (MTAPWRRLRSLVWEYWAGFLVCAFWIPDSRG) form the signal peptide. Residues 32–563 (MPHVIRIGGI…VFSFLNPLSP (532 aa)) are Extracellular-facing. N-linked (GlcNAc...) asparagine glycosylation is found at Asn-70, Asn-76, Asn-278, Asn-381, Asn-415, Asn-426, and Asn-433. A disulfide bond links Cys-99 and Cys-350. Residues Pro-518, Thr-520, and Arg-525 each contribute to the L-glutamate site. Residues Asn-548 and Asn-551 are each glycosylated (N-linked (GlcNAc...) asparagine). Residues 564–584 (DIWMYVLLAYLGVSCVLFVIA) traverse the membrane as a helical segment. Over 585–636 (RFSPYEWYDAHPCNPGSEVVENNFTLLNSFWFGMGSLMQQGSELMPKALSTR) the chain is Cytoplasmic. Residues 637 to 657 (IIGGIWWFFTLIIISSYTANL) form a helical membrane-spanning segment. Residues 658 to 820 (AAFLTVERME…KEASALGIQK (163 aa)) are Extracellular-facing. The L-glutamate site is built by Ala-691, Thr-692, and Glu-739. Asn-752 carries an N-linked (GlcNAc...) asparagine glycan. A helical transmembrane segment spans residues 821 to 841 (IGGIFIVLAAGLVLSVLVAVG). Residues 842-919 (EFIYKLRKTA…CSTSLAPVFP (78 aa)) are Cytoplasmic-facing. Ser-869 bears the Phosphoserine mark. Residue Lys-887 forms a Glycyl lysine isopeptide (Lys-Gly) (interchain with G-Cter in SUMO1) linkage.

This sequence belongs to the glutamate-gated ion channel (TC 1.A.10.1) family. GRIK3 subfamily. Homotetramer, and heterotetramer with GRIK4 or GRIK5. Can form functional heteromeric receptors with GRIK2. Interacts with PRKCABP. Interacts with NETO2. As to quaternary structure, homomeric GluR7A forms functional kainate receptors which have very low sensitivity to glutamate. Can form functional heteromeric receptors with GRIK4 and GRIK5. In terms of assembly, homomeric GluR7B forms functional kainate receptors. Mass spectrometry data suggest the protein is N-glycosylated at five distinct sites. In terms of tissue distribution, expressed in the olfactory bulb (at protein level). Expressed in the deep cortical layers, dentate gyrus, reticular thalamic nucleus, mammillary bodies, pons, and cerebellum of the adult.

Its subcellular location is the cell membrane. It localises to the postsynaptic cell membrane. It carries out the reaction Ca(2+)(in) = Ca(2+)(out). Functionally, ionotropic glutamate receptor that functions as a cation-permeable ligand-gated ion channel, gated by L-glutamate and the glutamatergic agonist kainic acid. Binding of the excitatory neurotransmitter L-glutamate induces a conformation change, leading to the opening of the cation channel, and thereby converts the chemical signal to an electrical impulse. The receptor then desensitizes rapidly and enters a transient inactive state, characterized by the presence of bound agonist. In association with GRIK2, involved in presynaptic facilitation of glutamate release at hippocampal mossy fiber synapses. In terms of biological role, ionotropic glutamate receptor that functions as a ligand-gated cation channel, gated by L-glutamate and the glutamatergic agonist kainic acid. The chain is Glutamate receptor ionotropic, kainate 3 (Grik3) from Rattus norvegicus (Rat).